Reading from the N-terminus, the 90-residue chain is uncharacterized protein (90 aa).

This is an uncharacterized protein from Mycoplasma genitalium (strain ATCC 33530 / DSM 19775 / NCTC 10195 / G37) (Mycoplasmoides genitalium).